The following is a 172-amino-acid chain: Adenine phosphoribosyltransferase (172 aa).

This sequence belongs to the purine/pyrimidine phosphoribosyltransferase family. As to quaternary structure, homodimer.

It localises to the cytoplasm. It carries out the reaction AMP + diphosphate = 5-phospho-alpha-D-ribose 1-diphosphate + adenine. It participates in purine metabolism; AMP biosynthesis via salvage pathway; AMP from adenine: step 1/1. In terms of biological role, catalyzes a salvage reaction resulting in the formation of AMP, that is energically less costly than de novo synthesis. This is Adenine phosphoribosyltransferase from Synechocystis sp. (strain ATCC 27184 / PCC 6803 / Kazusa).